Consider the following 163-residue polypeptide: uncharacterized protein (163 aa).

The tract at residues Trp144–Phe163 is disordered. The segment covering Pro154 to Phe163 has biased composition (gly residues).

This is an uncharacterized protein from Homo sapiens (Human).